A 262-amino-acid chain; its full sequence is Acyl-[acyl-carrier-protein]--UDP-N-acetylglucosamine O-acyltransferase (262 aa).

Belongs to the transferase hexapeptide repeat family. LpxA subfamily. In terms of assembly, homotrimer.

The protein localises to the cytoplasm. It catalyses the reaction a (3R)-hydroxyacyl-[ACP] + UDP-N-acetyl-alpha-D-glucosamine = a UDP-3-O-[(3R)-3-hydroxyacyl]-N-acetyl-alpha-D-glucosamine + holo-[ACP]. Its pathway is glycolipid biosynthesis; lipid IV(A) biosynthesis; lipid IV(A) from (3R)-3-hydroxytetradecanoyl-[acyl-carrier-protein] and UDP-N-acetyl-alpha-D-glucosamine: step 1/6. In terms of biological role, involved in the biosynthesis of lipid A, a phosphorylated glycolipid that anchors the lipopolysaccharide to the outer membrane of the cell. The chain is Acyl-[acyl-carrier-protein]--UDP-N-acetylglucosamine O-acyltransferase from Burkholderia multivorans (strain ATCC 17616 / 249).